The chain runs to 760 residues: Formin-like protein 8 (760 aa).

The N-terminal stretch at 1–29 (MAAMFNHPWPNLTLIYFFFIVVLPFQSLS) is a signal peptide. Residues 52 to 63 (PLLPPSSNPSPP) are compositionally biased toward pro residues. The segment at 52-71 (PLLPPSSNPSPPSNNSSSSD) is disordered. The helical transmembrane segment at 78–98 (AVLITAASTLLVAGVFFFCLQ) threads the bilayer. Residues 204 to 313 (TEIPLLRGRS…VKLKPLHWDK (110 aa)) form a disordered region. Over residues 253 to 274 (TPSPPPPIKKGSSPSPPPPPPV) the composition is skewed to pro residues. One can recognise an FH2 domain in the interval 296–732 (SGGETSKQVK…GSPISPSSQR (437 aa)).

It belongs to the formin-like family. Class-I subfamily. In terms of assembly, interacts with profilin.

The protein resides in the cell membrane. Might be involved in the organization and polarity of the actin cytoskeleton. Interacts with the barbed end of actin filaments and nucleates actin-filament polymerization in vitro. The polypeptide is Formin-like protein 8 (FH8) (Arabidopsis thaliana (Mouse-ear cress)).